The chain runs to 86 residues: Omega-theraphotoxin-Hhn1b (86 aa).

Residues 1 to 21 form the signal peptide; the sequence is MKSIVFVALFGLALLAVVCSA. The propeptide occupies 22–50; sequence SEDAHKELLKEVVRAMVVDKTDAVQAEER. 3 disulfides stabilise this stretch: C52-C66, C59-C71, and C65-C78.

This sequence belongs to the neurotoxin 10 (Hwtx-1) family. 17 (Hntx-9) subfamily. As to expression, expressed by the venom gland.

It localises to the secreted. Ion channel inhibitor. This chain is Omega-theraphotoxin-Hhn1b, found in Cyriopagopus hainanus (Chinese bird spider).